We begin with the raw amino-acid sequence, 918 residues long: Chitin synthase C (918 aa).

Residues 1–63 (MSYNRLGDPY…EMPSSDRLAE (63 aa)) are disordered. Over residues 22–37 (NPSSLSNRSPSPGRPL) the composition is skewed to low complexity. Helical transmembrane passes span 562–581 (WLNGSFFAAVYAITHFYQLW), 605–625 (LFAWFGIGNFFLVFHILTTYL), 637–657 (VLGVVFEWLYLATLVTCFVLS), and 672–692 (MVYLWVFIMIYLAFAAVFVTV). N-linked (GlcNAc...) asparagine glycosylation is present at asparagine 712. Transmembrane regions (helical) follow at residues 715–735 (FFSIIVSLGSTYVMWFIASII), 845–865 (VVLVWVFCNFALGAVVLSSAG), and 890–910 (VVLWSVAGLSIFKFLGAMWFL).

Belongs to the chitin synthase family. Class I subfamily. In terms of tissue distribution, mainly expressed in hyphae and conidiphores. Relatively strongly expressed in young cleistothecia and in mature ascospores, but negligible in Huelle cells.

Its subcellular location is the cell membrane. The protein resides in the cell septum. The protein localises to the cell tip. It carries out the reaction [(1-&gt;4)-N-acetyl-beta-D-glucosaminyl](n) + UDP-N-acetyl-alpha-D-glucosamine = [(1-&gt;4)-N-acetyl-beta-D-glucosaminyl](n+1) + UDP + H(+). Polymerizes chitin, a structural polymer of the cell wall and septum, by transferring the sugar moiety of UDP-GlcNAc to the non-reducing end of the growing chitin polymer. ChsC and chsA share critical functions in hyphal wall integrity and differentiation. ChsA and chsC share also overlapping roles in septum formation. The polypeptide is Chitin synthase C (Emericella nidulans (strain FGSC A4 / ATCC 38163 / CBS 112.46 / NRRL 194 / M139) (Aspergillus nidulans)).